Reading from the N-terminus, the 173-residue chain is Helix-loop-helix protein lin-22 (173 aa).

The segment at 21-34 (KKIKNKPLMEKKRR) is basic motif. The 58-residue stretch at 21–78 (KKIKNKPLMEKKRRARINKSLSQLKQILIQDEHKNSIQHSKWEKADILEMAVEYLQQL) folds into the bHLH domain. The interval 35 to 78 (ARINKSLSQLKQILIQDEHKNSIQHSKWEKADILEMAVEYLQQL) is helix-loop-helix motif. Positions 83 to 95 (PCSLSPSTSSIST) are enriched in low complexity. The segment at 83-102 (PCSLSPSTSSISTPPTPKEE) is disordered.

Expressed mostly in the seam (stem) cells and hypodermis (hyp7), but also to a lesser extent in the intestine.

It is found in the nucleus. Functionally, probable transcription factor. During development, required for cell fate specification, probably by promoting or repressing expression of genes involved in specific cell fate. Involved in specifying lineages derived from the epidermal stem cells of the lateral ectoderm, known as seam cells. Modulates symmetric divisions of seam cells, perhaps in concert with the Wnt signaling pathway. May repress expression of homeobox genes mab-5, egl-5 and lin-39. This is Helix-loop-helix protein lin-22 from Caenorhabditis elegans.